The sequence spans 871 residues: MNSLYELDPKWKKLLKTDNFLGGLTVNEFVQELSKDHRNDVLIDANTKNLPTNEKDQDAIREAIWKQLDPKPYIRTFESTLKELKNLNEETLNKRQYFSEQVATQEVIHSENVIKLSKDLHTTLLTFDKLDDRLTNVTQVVSPLGDKLETAIKKKQNYIQSVELIRRYNDFYSMGKSDIVEQLRLSKNWKLNLKSVKLMKNLLILSSKLETSSIPKTINTKLVIEKYSEMMENELLENFNSAYRENNFTKLNEIAIILNNFNGGVNVIQSFINQHDYFIDTKQIDLENEFENVFIKNVKFKEQLIDFENHSVIIETSMQNLINDVETVIKNESKIVKRVFEEKATHVIQLFIQRVFAQKIEPRFEVLLRNSLSISNLAYVRILHGLFTLFGKFTKSLIDYFQLLEIDDSNQILSTTLEQCFADLFSHYLYDRSKYFGIEKRSLEAILVDMTSKFTVNYDKEINKRVLLDKYKEKLSTNVDAFMHSPRGNTHSRQDSTSRSKLSQFNSFLKTHLDKDHLSLNRTNTLSDSFNNSSSSTQYDVANNSSSLVNSSFTASDIDNSPNSPANYSLNDVDSMLKCVVESTARVMELIPNKAHLYILEILKIMFLGIVDSYMEIALEVAYWKICKVDINKTAGVVNLNFLKFISMSTEILDLLSISIKSIFLPLLNNSPEIKAQIIEMTNSQIQKMEILINIILQETITVISTKFSAILCKQKKKDFVPKSQELLDQDTLPAIEIVNILNLIFEQSSKFLKGKNLQTFLTLIGEELYGLLLSHYSHFQVNSIGGVVVTKDIIGYQTAIEDWGVASLIDKFATLRELANLFTVQPELLESLTKEGHLADIGRDIIQSYISNREDFNHDNFINSVKLNFR.

The stretch at 74–101 (IRTFESTLKELKNLNEETLNKRQYFSEQ) forms a coiled coil. Phosphoserine occurs at positions 142, 485, and 507.

It belongs to the SEC10 family. In terms of assembly, the exocyst complex is composed of SEC3, SEC5, SEC6, SEC8, SEC10, SEC15, EXO70 and EXO84.

Functionally, component of the exocyst complex involved in the docking of exocytic vesicles with fusion sites on the plasma membrane. This chain is Exocyst complex component SEC10 (SEC10), found in Saccharomyces cerevisiae (strain ATCC 204508 / S288c) (Baker's yeast).